The chain runs to 268 residues: Tryptophan synthase alpha chain (268 aa).

Active-site proton acceptor residues include Glu49 and Asp60.

Belongs to the TrpA family. As to quaternary structure, tetramer of two alpha and two beta chains.

The catalysed reaction is (1S,2R)-1-C-(indol-3-yl)glycerol 3-phosphate + L-serine = D-glyceraldehyde 3-phosphate + L-tryptophan + H2O. Its pathway is amino-acid biosynthesis; L-tryptophan biosynthesis; L-tryptophan from chorismate: step 5/5. Its function is as follows. The alpha subunit is responsible for the aldol cleavage of indoleglycerol phosphate to indole and glyceraldehyde 3-phosphate. This chain is Tryptophan synthase alpha chain, found in Escherichia fergusonii (strain ATCC 35469 / DSM 13698 / CCUG 18766 / IAM 14443 / JCM 21226 / LMG 7866 / NBRC 102419 / NCTC 12128 / CDC 0568-73).